A 201-amino-acid chain; its full sequence is 3-isopropylmalate dehydratase small subunit (201 aa).

It belongs to the LeuD family. LeuD type 1 subfamily. Heterodimer of LeuC and LeuD.

The catalysed reaction is (2R,3S)-3-isopropylmalate = (2S)-2-isopropylmalate. It participates in amino-acid biosynthesis; L-leucine biosynthesis; L-leucine from 3-methyl-2-oxobutanoate: step 2/4. Functionally, catalyzes the isomerization between 2-isopropylmalate and 3-isopropylmalate, via the formation of 2-isopropylmaleate. The protein is 3-isopropylmalate dehydratase small subunit of Roseobacter denitrificans (strain ATCC 33942 / OCh 114) (Erythrobacter sp. (strain OCh 114)).